The following is a 110-amino-acid chain: Insulin growth factor-like family member 1 (110 aa).

Positions 1–24 (MAPRGCIVAVFAIFCISRLLCSHG) are cleaved as a signal peptide. An N-linked (GlcNAc...) asparagine glycan is attached at asparagine 71.

Belongs to the IGFL family. As to quaternary structure, homodimer; disulfide-linked. As to expression, detected in ovary and spinal cord.

The protein localises to the secreted. Functionally, probable ligand of the IGFLR1 cell membrane receptor. The polypeptide is Insulin growth factor-like family member 1 (IGFL1) (Homo sapiens (Human)).